A 323-amino-acid chain; its full sequence is tRNA U34 carboxymethyltransferase (323 aa).

Residues Lys-91, Trp-105, Lys-110, Gly-130, 152 to 154, 181 to 182, Met-196, Tyr-200, and Arg-315 each bind carboxy-S-adenosyl-L-methionine; these read DPS and IE.

The protein belongs to the class I-like SAM-binding methyltransferase superfamily. CmoB family. As to quaternary structure, homotetramer.

The enzyme catalyses carboxy-S-adenosyl-L-methionine + 5-hydroxyuridine(34) in tRNA = 5-carboxymethoxyuridine(34) in tRNA + S-adenosyl-L-homocysteine + H(+). Functionally, catalyzes carboxymethyl transfer from carboxy-S-adenosyl-L-methionine (Cx-SAM) to 5-hydroxyuridine (ho5U) to form 5-carboxymethoxyuridine (cmo5U) at position 34 in tRNAs. In Vibrio campbellii (strain ATCC BAA-1116), this protein is tRNA U34 carboxymethyltransferase.